The primary structure comprises 305 residues: ATP synthase F(0) complex subunit B2, mitochondrial (305 aa).

The N-terminal 22 residues, Met1 to Leu22, are a transit peptide targeting the mitochondrion.

This sequence belongs to the eukaryotic ATPase B chain family. In terms of assembly, subunit of the F-type ATPase which has 2 components, CF(1) - the catalytic core - and CF(0) - the membrane proton channel.

The protein resides in the mitochondrion. It localises to the mitochondrion inner membrane. Mitochondrial membrane ATP synthase (F(1)F(0) ATP synthase or Complex V) produces ATP from ADP in the presence of a proton gradient across the membrane which is generated by electron transport complexes of the respiratory chain. F-type ATPases consist of two structural domains, F(1) - containing the extramembraneous catalytic core, and F(0) - containing the membrane proton channel, linked together by a central stalk and a peripheral stalk. During catalysis, ATP synthesis in the catalytic domain of F(1) is coupled via a rotary mechanism of the central stalk subunits to proton translocation. Part of the complex F(0) domain and the peripheric stalk, which acts as a stator to hold the subunits of the catalytic subcomplexes relative to the rotary elements. Plays a role in somatic development. Does not play a role in germline development. The protein is ATP synthase F(0) complex subunit B2, mitochondrial of Caenorhabditis elegans.